The chain runs to 268 residues: Tryptophan synthase alpha chain (268 aa).

Catalysis depends on proton acceptor residues glutamate 49 and aspartate 60.

It belongs to the TrpA family. As to quaternary structure, tetramer of two alpha and two beta chains.

It catalyses the reaction (1S,2R)-1-C-(indol-3-yl)glycerol 3-phosphate + L-serine = D-glyceraldehyde 3-phosphate + L-tryptophan + H2O. It functions in the pathway amino-acid biosynthesis; L-tryptophan biosynthesis; L-tryptophan from chorismate: step 5/5. In terms of biological role, the alpha subunit is responsible for the aldol cleavage of indoleglycerol phosphate to indole and glyceraldehyde 3-phosphate. This chain is Tryptophan synthase alpha chain, found in Pseudomonas aeruginosa (strain UCBPP-PA14).